The sequence spans 296 residues: GTP-binding protein GEM (296 aa).

Disordered regions lie at residues 1–20 (MTLN…PQQQ) and 37–68 (PHQY…SVIS). The span at 57–68 (SWSSDSTDSVIS) shows a compositional bias: low complexity. GTP contacts are provided by residues 82-89 (GEQGVGKS) and 191-194 (NKSD). The segment at 266 to 285 (ARRFWGKIVAKNNKNMAFKL) is calmodulin-binding.

The protein belongs to the small GTPase superfamily. RGK family. In terms of assembly, interacts with calmodulin in a Ca(2+)-dependent manner. Binds ROCK1. Post-translationally, phosphorylated on tyrosine residues. Most abundant in thymus, spleen, kidney, lung, and testis. Less abundant in heart, brain, liver and skeletal muscle.

The protein localises to the cell membrane. Could be a regulatory protein, possibly participating in receptor-mediated signal transduction at the plasma membrane. Has guanine nucleotide-binding activity but undetectable intrinsic GTPase activity. In Homo sapiens (Human), this protein is GTP-binding protein GEM (GEM).